The chain runs to 379 residues: Pectin lyase A (379 aa).

The signal sequence occupies residues 1-20; the sequence is MKYSTIFSAAAAVFAGSAAA. Cystine bridges form between cysteine 83-cysteine 102 and cysteine 92-cysteine 226. Threonine 88 is a glycosylation site (O-linked (Man) threonine). The N-linked (GlcNAc...) asparagine glycan is linked to asparagine 129. The active site involves arginine 256. Cysteines 322 and 330 form a disulfide. Serine 368 carries an O-linked (Man) serine; in strain 4M-147 glycan.

This sequence belongs to the polysaccharide lyase 1 family. Post-translationally, N-glycosylated at Asn-129 and O-glycosylated at Thr-88 when expressed in Aspergillus nidulans. The protein from strain 4M-147 is O-glycosylated at Thr-88 and Ser-368. PubMed:9195887 modeled GalNAc at the O-glycosylation site, a glycosylation not observed in fungi. The O-linked saccharide is probably mannose.

The protein localises to the secreted. It carries out the reaction Eliminative cleavage of (1-&gt;4)-alpha-D-galacturonan methyl ester to give oligosaccharides with 4-deoxy-6-O-methyl-alpha-D-galact-4-enuronosyl groups at their non-reducing ends.. Pectinolytic enzymes consist of four classes of enzymes: pectin lyase, polygalacturonase, pectin methylesterase and rhamnogalacturonase. Among pectinolytic enzymes, pectin lyase is the most important in depolymerization of pectin, since it cleaves internal glycosidic bonds of highly methylated pectins. The protein is Pectin lyase A (pelA) of Aspergillus niger.